A 188-amino-acid chain; its full sequence is MSYLVVTIKVILITGMPGSGKSEFAKLLKERGAKVIVMSDVVRKRYSIEAKPGERLMDFAKRLREIYGDGVVARLCVEELGTSNHDLVVFDGVRSLAEVEEFKRLLGDSVYIVAVHSPPKIRYKRIIERLRSDDSKEISELIRRDREELKLGIGEVIAMADYIITNDSNYEEFKRRCEEVTDRVLKNG.

15-22 (GMPGSGKS) serves as a coordination point for ATP.

Belongs to the UPF0200 family.

The protein is UPF0200 protein M164_1169 of Saccharolobus islandicus (strain M.16.4 / Kamchatka #3) (Sulfolobus islandicus).